We begin with the raw amino-acid sequence, 346 residues long: 3-dehydroquinate synthase (346 aa).

Residues 62 to 67 (DGEEYK), 96 to 100 (GVISD), 120 to 121 (TT), K133, K142, and 160 to 163 (FLRT) each bind NAD(+). Residues E175, H234, and H251 each coordinate Zn(2+).

The protein belongs to the sugar phosphate cyclases superfamily. Dehydroquinate synthase family. Co(2+) is required as a cofactor. The cofactor is Zn(2+). Requires NAD(+) as cofactor.

The protein resides in the cytoplasm. It catalyses the reaction 7-phospho-2-dehydro-3-deoxy-D-arabino-heptonate = 3-dehydroquinate + phosphate. It functions in the pathway metabolic intermediate biosynthesis; chorismate biosynthesis; chorismate from D-erythrose 4-phosphate and phosphoenolpyruvate: step 2/7. Functionally, catalyzes the conversion of 3-deoxy-D-arabino-heptulosonate 7-phosphate (DAHP) to dehydroquinate (DHQ). The polypeptide is 3-dehydroquinate synthase (Campylobacter curvus (strain 525.92)).